We begin with the raw amino-acid sequence, 128 residues long: Large ribosomal subunit protein bL20c (128 aa).

It belongs to the bacterial ribosomal protein bL20 family.

The protein resides in the plastid. It is found in the chloroplast. Functionally, binds directly to 23S ribosomal RNA and is necessary for the in vitro assembly process of the 50S ribosomal subunit. It is not involved in the protein synthesizing functions of that subunit. The chain is Large ribosomal subunit protein bL20c from Nicotiana sylvestris (Wood tobacco).